Reading from the N-terminus, the 600-residue chain is Polypeptide N-acetylgalactosaminyltransferase (600 aa).

The Cytoplasmic segment spans residues 1-7; it reads MVRRKLR. A helical; Signal-anchor for type II membrane protein membrane pass occupies residues 8–28; the sequence is LLVILAGIWLVGIVVYLFKGD. The Lumenal portion of the chain corresponds to 29–600; sequence DQSEFEKRVI…KWTFSLSKNR (572 aa). Cystine bridges form between cysteine 154-cysteine 382, cysteine 373-cysteine 451, cysteine 484-cysteine 501, cysteine 524-cysteine 541, and cysteine 567-cysteine 583. Residues 163–268 are catalytic subdomain A; sequence LPDTSVIITF…EKWLEPLLDR (106 aa). 3 residues coordinate substrate: threonine 171, aspartate 204, and arginine 229. Aspartate 252 contacts Mn(2+). Serine 253 lines the substrate pocket. Histidine 254 lines the Mn(2+) pocket. Residues 328 to 390 are catalytic subdomain B; it reads PIRTPMIAGG…PCSRVGHVFR (63 aa). Tryptophan 359 is a binding site for substrate. Histidine 387 serves as a coordination point for Mn(2+). Substrate contacts are provided by arginine 390, histidine 393, and tyrosine 395. Positions 466-595 constitute a Ricin B-type lectin domain; the sequence is KIPSVQDIAF…SSYTQKWTFS (130 aa).

Belongs to the glycosyltransferase 2 family. GalNAc-T subfamily. Mn(2+) is required as a cofactor. Post-translationally, O-glycosylated.

Its subcellular location is the golgi apparatus membrane. It catalyses the reaction L-seryl-[protein] + UDP-N-acetyl-alpha-D-galactosamine = a 3-O-[N-acetyl-alpha-D-galactosaminyl]-L-seryl-[protein] + UDP + H(+). The enzyme catalyses L-threonyl-[protein] + UDP-N-acetyl-alpha-D-galactosamine = a 3-O-[N-acetyl-alpha-D-galactosaminyl]-L-threonyl-[protein] + UDP + H(+). The protein operates within protein modification; protein glycosylation. No change in activity by addition of up to 10% methanol or glycerol, or 5% acetonitrile. 40% reduction in activity by 10% acetonitrile or by lyophilization. Activity requires divalent cations, the best being Mn(2+) (10-20 mM), followed by Co(2+), Mg(2+) and Ca(2+). Loss of activity with Cu(2+) or in the presence of EDTA. Inhibited by UDP, but not by UMP, UTP, ADP or GDP nucleotides. No inhibition by galactose, N-acetylglucosamine or N-acetylgalactosamine sugars. In terms of biological role, catalyzes the initial reaction in O-linked oligosaccharide biosynthesis, the transfer of an N-acetyl-D-galactosamine residue to a serine or threonine residue on the protein receptor. Has a broad substrate specificity. Acceptor peptides include Muc2, Muc5Ac, Muc1a and Muc1a', with Muc2 as the best acceptor. Acts on non-glycosylated and mono- or multi-glycosylated peptide substrates. Transfers preferably to threonine rather than serine residue. Thr-15 is the most preferred site of glycosylation in Muc2 peptide PTTTPITTTTTVTPTPTPTGTQTK having proline residues at position -1, and at positions +1 and +3, where the number represents the distance from the C-terminal and N-terminal hydroxyl amino acid, respectively. Transfer of the N-acetyl-D-galactosamine (GalNAc) is optimal with proline residues at positions -3, -1, +1 and +3, but other amino acids are tolerated, although some, such as phenylalanine, isoleucine or leucine at -1, or lysine at +3 prevent the transfer completely. Second GalNAc is transferred to Muc2 Thr-2 or Thr-13, both of which have two proline residues nearby. Up to nine sites can be glycosylated within Muc2, but eight are used simultaneously since Thr-19 and Thr-21 are not detected to be glycosylated at the same time. Glycosylation is not detected of a potential site, which is next to an already glycosylated site, but only one amino acid is needed in between two glycosylation sites. Ser-5 is the preferred glycosylation site in Muc5Ac peptide GTTPSPVPTTSTTSAP into which up to four GalNAcs can be attached. Only the threonine residues are detected as pontential glycosylation sites in Muc1a APPAHGVTSAPDTRPAPGC and Muc1a' AHGVTSAPDTR peptides. Transferase activity is restricted to UDP-GalNAc as a donor, and none of the nucleotide sugars UDP-Gal, UDP-GlcNAc, GDP-fucose, UDP-xylose, UDP-glucuronic acid or CMP-neuraminic acid are utilized as donors. In Biomphalaria glabrata (Bloodfluke planorb), this protein is Polypeptide N-acetylgalactosaminyltransferase.